The following is a 239-amino-acid chain: Lipoprotein-releasing system ATP-binding protein LolD (239 aa).

The 230-residue stretch at 10 to 239 (VELSGVRKDY…ADGPHRRSGA (230 aa)) folds into the ABC transporter domain. 46–53 (GPSGSGKS) is a binding site for ATP.

This sequence belongs to the ABC transporter superfamily. Lipoprotein translocase (TC 3.A.1.125) family. In terms of assembly, the complex is composed of two ATP-binding proteins (LolD) and two transmembrane proteins (LolC and LolE).

Its subcellular location is the cell inner membrane. In terms of biological role, part of the ABC transporter complex LolCDE involved in the translocation of mature outer membrane-directed lipoproteins, from the inner membrane to the periplasmic chaperone, LolA. Responsible for the formation of the LolA-lipoprotein complex in an ATP-dependent manner. The sequence is that of Lipoprotein-releasing system ATP-binding protein LolD from Anaeromyxobacter dehalogenans (strain 2CP-C).